The primary structure comprises 495 residues: Probable polyamine transporter At1g31830 (495 aa).

11 helical membrane-spanning segments follow: residues 49–69 (VSML…PFGV), 79–99 (LLAL…EALI), 112–132 (GYVV…QGWM), 156–176 (VPAL…TILL), 186–206 (IVGW…AVMG), 230–250 (LYLN…TLAG), 267–287 (VILV…AIPL), 357–377 (TPLL…WLSF), 380–400 (IVAA…IAFV), 417–437 (IGTT…CAVV), and 442–462 (LKVA…HPLL).

It belongs to the amino acid-polyamine-organocation (APC) superfamily. Polyamine:cation symporter (PHS) (TC 2.A.3.12) family.

Its subcellular location is the cell membrane. Probable cell membrane polyamine/proton symporter involved in the polyamine uptake in cells. The sequence is that of Probable polyamine transporter At1g31830 from Arabidopsis thaliana (Mouse-ear cress).